The sequence spans 349 residues: MIINSLKRFGITTGAAASAAAKAAVIGLLNREKRNTVVIPTPIGLRLEIPVEKVEIDSGIACAEVKKFSGDNPDILDGLVIRCCAKLNESNEIVIVGGKGVGKVTRSGLKATMGETAISPTVRDMVINAIREVTDKGIQITIEVPNGDIIAENTLNKMVGIVGGISILGTTGIETPVSDDDYLEHIKCELNVIRQSYDFVVIAPGNSAAKYASKLFDSNSIIKVGDRIGDSIKLASSVFRKVILAGLPAKLLKVYAGIFNTHYSQGDARLESLTHASVLAGLPYDVLTKITNALSVEEAFTYMTKEQRRKVMKIVAEKILSRIKSFNGDINFCVIIFDYDSESLSRVGC.

This sequence belongs to the CbiD family.

It catalyses the reaction Co-precorrin-5B + S-adenosyl-L-methionine = Co-precorrin-6A + S-adenosyl-L-homocysteine. It participates in cofactor biosynthesis; adenosylcobalamin biosynthesis; cob(II)yrinate a,c-diamide from sirohydrochlorin (anaerobic route): step 6/10. In terms of biological role, catalyzes the methylation of C-1 in cobalt-precorrin-5B to form cobalt-precorrin-6A. This Saccharolobus islandicus (strain L.S.2.15 / Lassen #1) (Sulfolobus islandicus) protein is Cobalt-precorrin-5B C(1)-methyltransferase.